A 229-amino-acid chain; its full sequence is 5'-methylthioadenosine/S-adenosylhomocysteine nucleosidase (229 aa).

Catalysis depends on Glu12, which acts as the Proton acceptor. Residues Gly78, Ile152, and 173–174 (ME) contribute to the substrate site. Asp197 (proton donor) is an active-site residue.

This sequence belongs to the PNP/UDP phosphorylase family. MtnN subfamily.

It catalyses the reaction S-adenosyl-L-homocysteine + H2O = S-(5-deoxy-D-ribos-5-yl)-L-homocysteine + adenine. It carries out the reaction S-methyl-5'-thioadenosine + H2O = 5-(methylsulfanyl)-D-ribose + adenine. The enzyme catalyses 5'-deoxyadenosine + H2O = 5-deoxy-D-ribose + adenine. The protein operates within amino-acid biosynthesis; L-methionine biosynthesis via salvage pathway; S-methyl-5-thio-alpha-D-ribose 1-phosphate from S-methyl-5'-thioadenosine (hydrolase route): step 1/2. Its function is as follows. Catalyzes the irreversible cleavage of the glycosidic bond in both 5'-methylthioadenosine (MTA) and S-adenosylhomocysteine (SAH/AdoHcy) to adenine and the corresponding thioribose, 5'-methylthioribose and S-ribosylhomocysteine, respectively. Also cleaves 5'-deoxyadenosine, a toxic by-product of radical S-adenosylmethionine (SAM) enzymes, into 5-deoxyribose and adenine. This is 5'-methylthioadenosine/S-adenosylhomocysteine nucleosidase from Histophilus somni (strain 2336) (Haemophilus somnus).